Here is a 488-residue protein sequence, read N- to C-terminus: Eukaryotic translation initiation factor 3 subunit L (488 aa).

2 disordered regions span residues 1 to 34 and 427 to 449; these read MSLPQHQNRDAARRAPDDDDDAEEETMANDYREQ and SEGGLLERRGDPQQRSRLRHGKE. The segment covering 7 to 16 has biased composition (basic and acidic residues); the sequence is QNRDAARRAP. The segment covering 17-27 has biased composition (acidic residues); sequence DDDDDAEEETM. A PCI domain is found at 256–450; it reads DAIRMFSHIL…RSRLRHGKEI (195 aa). Over residues 431–440 the composition is skewed to basic and acidic residues; it reads LLERRGDPQQ.

It belongs to the eIF-3 subunit L family. As to quaternary structure, component of the eukaryotic translation initiation factor 3 (eIF-3) complex.

It is found in the cytoplasm. In terms of biological role, component of the eukaryotic translation initiation factor 3 (eIF-3) complex, which is involved in protein synthesis of a specialized repertoire of mRNAs and, together with other initiation factors, stimulates binding of mRNA and methionyl-tRNAi to the 40S ribosome. The eIF-3 complex specifically targets and initiates translation of a subset of mRNAs involved in cell proliferation. This chain is Eukaryotic translation initiation factor 3 subunit L, found in Phaeosphaeria nodorum (strain SN15 / ATCC MYA-4574 / FGSC 10173) (Glume blotch fungus).